Here is a 132-residue protein sequence, read N- to C-terminus: Transcription antitermination protein NusB (132 aa).

The protein belongs to the NusB family.

Its function is as follows. Involved in transcription antitermination. Required for transcription of ribosomal RNA (rRNA) genes. Binds specifically to the boxA antiterminator sequence of the ribosomal RNA (rrn) operons. The protein is Transcription antitermination protein NusB of Campylobacter jejuni subsp. jejuni serotype O:6 (strain 81116 / NCTC 11828).